Reading from the N-terminus, the 404-residue chain is Cysteine desulfurase IscS (404 aa).

Pyridoxal 5'-phosphate is bound by residues 75-76 (AT), Asn-155, Gln-183, and 203-205 (TGH). Position 206 is an N6-(pyridoxal phosphate)lysine (Lys-206). A pyridoxal 5'-phosphate-binding site is contributed by Thr-243. The active-site Cysteine persulfide intermediate is Cys-328. Position 328 (Cys-328) interacts with [2Fe-2S] cluster.

The protein belongs to the class-V pyridoxal-phosphate-dependent aminotransferase family. NifS/IscS subfamily. As to quaternary structure, homodimer. Forms a heterotetramer with IscU, interacts with other sulfur acceptors. It depends on pyridoxal 5'-phosphate as a cofactor.

The protein localises to the cytoplasm. It catalyses the reaction (sulfur carrier)-H + L-cysteine = (sulfur carrier)-SH + L-alanine. The protein operates within cofactor biosynthesis; iron-sulfur cluster biosynthesis. In terms of biological role, master enzyme that delivers sulfur to a number of partners involved in Fe-S cluster assembly, tRNA modification or cofactor biosynthesis. Catalyzes the removal of elemental sulfur atoms from cysteine to produce alanine. Functions as a sulfur delivery protein for Fe-S cluster synthesis onto IscU, an Fe-S scaffold assembly protein, as well as other S acceptor proteins. In Enterobacter sp. (strain 638), this protein is Cysteine desulfurase IscS.